A 597-amino-acid chain; its full sequence is Elongation factor 4 (597 aa).

Residues 2-184 (KHIRNFSIIA…TIVKSIPAPE (183 aa)) enclose the tr-type G domain. Residues 14–19 (DHGKST) and 131–134 (NKID) contribute to the GTP site.

Belongs to the TRAFAC class translation factor GTPase superfamily. Classic translation factor GTPase family. LepA subfamily.

It is found in the cell inner membrane. It catalyses the reaction GTP + H2O = GDP + phosphate + H(+). In terms of biological role, required for accurate and efficient protein synthesis under certain stress conditions. May act as a fidelity factor of the translation reaction, by catalyzing a one-codon backward translocation of tRNAs on improperly translocated ribosomes. Back-translocation proceeds from a post-translocation (POST) complex to a pre-translocation (PRE) complex, thus giving elongation factor G a second chance to translocate the tRNAs correctly. Binds to ribosomes in a GTP-dependent manner. In Aliivibrio fischeri (strain ATCC 700601 / ES114) (Vibrio fischeri), this protein is Elongation factor 4.